A 213-amino-acid chain; its full sequence is Cytochrome c biogenesis ATP-binding export protein CcmA (213 aa).

The 203-residue stretch at 11 to 213 (LTARNLECIR…TVTVHHLVLS (203 aa)) folds into the ABC transporter domain. Position 43-50 (43-50 (GPNGSGKT)) interacts with ATP.

The protein belongs to the ABC transporter superfamily. CcmA exporter (TC 3.A.1.107) family. The complex is composed of two ATP-binding proteins (CcmA) and two transmembrane proteins (CcmB).

The protein localises to the cell inner membrane. It carries out the reaction heme b(in) + ATP + H2O = heme b(out) + ADP + phosphate + H(+). In terms of biological role, part of the ABC transporter complex CcmAB involved in the biogenesis of c-type cytochromes; once thought to export heme, this seems not to be the case, but its exact role is uncertain. Responsible for energy coupling to the transport system. This Nitrosomonas europaea (strain ATCC 19718 / CIP 103999 / KCTC 2705 / NBRC 14298) protein is Cytochrome c biogenesis ATP-binding export protein CcmA.